We begin with the raw amino-acid sequence, 466 residues long: MLRRGGSASTLRRSRTSNLLLHSFPYRWDVTECAGAREKILIYGLGRSGRGVARFLAREGVRAEWHDAHPTAEDEALMQELGFLRGDPGGTYRTVVAAPGVPIDHADLLALSAGGAEIIGEVTLAARLRPHLPLVGVTGTAGKGGTTVLIAHLLRAQGLSALEGGNIDPPLLDVVDQAEVAVVELSSFQLERVPGLRLPVAVITNLGVDHLDRHRTVEAYHAAKLNITAGQEAEDVLVVPAGLEVRTRAQLRPFQPERLSLADGRELLPVADLPEGIHPANAAAAVLAAEALLTRLGRPVEPERLAAGLRSARPVAGRFETVARIGNVRFIEDSIATRTLAVEAALTRAVPPIAWLVGGRDKGADLVPLRAAAQGRVRRVIAFGEDGEKLARALGLPFETVPGTDGDTVMQAATRAGLEALGGPGGAGTVLLAPIGTSFDLFRDYKARGASFTRAARALVAGEVRA.

Gly-139 to Gly-145 is a binding site for ATP.

The protein belongs to the MurCDEF family.

The protein resides in the cytoplasm. The enzyme catalyses UDP-N-acetyl-alpha-D-muramoyl-L-alanine + D-glutamate + ATP = UDP-N-acetyl-alpha-D-muramoyl-L-alanyl-D-glutamate + ADP + phosphate + H(+). The protein operates within cell wall biogenesis; peptidoglycan biosynthesis. Cell wall formation. Catalyzes the addition of glutamate to the nucleotide precursor UDP-N-acetylmuramoyl-L-alanine (UMA). This Deinococcus geothermalis (strain DSM 11300 / CIP 105573 / AG-3a) protein is UDP-N-acetylmuramoylalanine--D-glutamate ligase.